Reading from the N-terminus, the 780-residue chain is WD repeat-containing protein 27 (780 aa).

13 WD repeats span residues 3 to 56 (TPPE…VWSS), 61 to 100 (HQLL…MWNV), 111 to 150 (LTPR…VMDV), 154 to 193 (SVLV…VWDF), 200 to 236 (YSSS…IFSL), 291 to 335 (FPIL…LASF), 342 to 385 (HFKE…VLEI), 500 to 540 (NLSR…VFNA), 544 to 582 (GPPA…VWSV), 588 to 639 (MLLL…RYKP), 644 to 685 (KPIF…VFDL), 691 to 738 (AAVL…LWDL), and 752 to 779 (AFCT…LSQP).

The chain is WD repeat-containing protein 27 (Wdr27) from Mus musculus (Mouse).